Here is a 99-residue protein sequence, read N- to C-terminus: Small ribosomal subunit protein bS20 (99 aa).

The span at 1 to 20 (MASAKPKKKNPRLASGRKRA) shows a compositional bias: basic residues. Residues 1 to 29 (MASAKPKKKNPRLASGRKRARQDVKLNAA) are disordered.

This sequence belongs to the bacterial ribosomal protein bS20 family.

In terms of biological role, binds directly to 16S ribosomal RNA. The protein is Small ribosomal subunit protein bS20 of Paracidovorax citrulli (strain AAC00-1) (Acidovorax citrulli).